We begin with the raw amino-acid sequence, 220 residues long: 7-cyano-7-deazaguanine synthase 1 (220 aa).

10 to 20 contacts ATP; sequence FSGGIDSTVLL. Residues cysteine 183, cysteine 191, cysteine 194, and cysteine 197 each coordinate Zn(2+).

Belongs to the QueC family. As to quaternary structure, homodimer. It depends on Zn(2+) as a cofactor.

It catalyses the reaction 7-carboxy-7-deazaguanine + NH4(+) + ATP = 7-cyano-7-deazaguanine + ADP + phosphate + H2O + H(+). The protein operates within purine metabolism; 7-cyano-7-deazaguanine biosynthesis. Its function is as follows. Catalyzes the ATP-dependent conversion of 7-carboxy-7-deazaguanine (CDG) to 7-cyano-7-deazaguanine (preQ(0)). In Desulfitobacterium hafniense (strain Y51), this protein is 7-cyano-7-deazaguanine synthase 1.